Consider the following 428-residue polypeptide: MRVQKPKGTVDILPEQSGSWQKVEETARNFFNRANYREIRTPSFENYEIFSRSSGDSSEIVEKQMYDFNDKGGRHIALRPEGTAGVVRAYVEDKMYAPEVVKPFNVFYMESTFRYERPQAGRQREFHQIGVESFGSSNPLADVQTIMMGHDLLGELGVKNYQLHINTLGNEQVRKGYHDALVNYFTPVKDELSEDSQRRLRDNPLRILDSKDDRDKKFLPDAPKIRDFLDDNSKANFESILKMLDQLGIDYVIDDDLVRGLDYYTGVIFEFMVEDKSLWESATTILGGGRYDHLVEEFNGPETPAVGFGIGEERLMLVLEKQNPELFKNEGIDFFITNIGEGTAQKAIEIARSLRKQGFEADFDVNQKKLKGQFKKADREGAKYVITLGEKELANGVLNIKRLADGKTIDLSLEDINDMNKVMKELKD.

This sequence belongs to the class-II aminoacyl-tRNA synthetase family. In terms of assembly, homodimer.

The protein localises to the cytoplasm. It carries out the reaction tRNA(His) + L-histidine + ATP = L-histidyl-tRNA(His) + AMP + diphosphate + H(+). In Lactobacillus helveticus (strain DPC 4571), this protein is Histidine--tRNA ligase.